We begin with the raw amino-acid sequence, 179 residues long: Large ribosomal subunit protein uL5 (179 aa).

It belongs to the universal ribosomal protein uL5 family. Part of the 50S ribosomal subunit; part of the 5S rRNA/L5/L18/L25 subcomplex. Contacts the 5S rRNA and the P site tRNA. Forms a bridge to the 30S subunit in the 70S ribosome.

This is one of the proteins that bind and probably mediate the attachment of the 5S RNA into the large ribosomal subunit, where it forms part of the central protuberance. In the 70S ribosome it contacts protein S13 of the 30S subunit (bridge B1b), connecting the 2 subunits; this bridge is implicated in subunit movement. Contacts the P site tRNA; the 5S rRNA and some of its associated proteins might help stabilize positioning of ribosome-bound tRNAs. The chain is Large ribosomal subunit protein uL5 from Buchnera aphidicola subsp. Baizongia pistaciae (strain Bp).